Here is a 374-residue protein sequence, read N- to C-terminus: Chaperone protein DnaJ (374 aa).

In terms of domain architecture, J spans 5–69 (DYYEVLGVSK…DKKAKYDQFG (65 aa)). A CR-type zinc finger spans residues 141–223 (GVNKKTILNL…CHGKGVESKR (83 aa)). The Zn(2+) site is built by C154, C157, C171, C174, C197, C200, C211, and C214. CXXCXGXG motif repeat units lie at residues 154–161 (CTKCDGVG), 171–178 (CTKCNGAG), 197–204 (CDKCNGVG), and 211–218 (CKNCHGKG).

It belongs to the DnaJ family. In terms of assembly, homodimer. It depends on Zn(2+) as a cofactor.

The protein resides in the cytoplasm. Functionally, participates actively in the response to hyperosmotic and heat shock by preventing the aggregation of stress-denatured proteins and by disaggregating proteins, also in an autonomous, DnaK-independent fashion. Unfolded proteins bind initially to DnaJ; upon interaction with the DnaJ-bound protein, DnaK hydrolyzes its bound ATP, resulting in the formation of a stable complex. GrpE releases ADP from DnaK; ATP binding to DnaK triggers the release of the substrate protein, thus completing the reaction cycle. Several rounds of ATP-dependent interactions between DnaJ, DnaK and GrpE are required for fully efficient folding. Also involved, together with DnaK and GrpE, in the DNA replication of plasmids through activation of initiation proteins. This chain is Chaperone protein DnaJ, found in Mesoplasma florum (strain ATCC 33453 / NBRC 100688 / NCTC 11704 / L1) (Acholeplasma florum).